Here is a 349-residue protein sequence, read N- to C-terminus: Sphingomyelinase D (349 aa).

The first 18 residues, 1 to 18 (MLLSSLISLALLSSQVVA), serve as a signal peptide directing secretion. H52 is a catalytic residue. Residues E72, D74, and D123 each coordinate Mg(2+). Residues 310-317 (ATNDNNPW) carry the SMD-tail motif.

The protein belongs to the sphingomyelinase D/phospholipase D family. Requires Mg(2+) as cofactor.

The protein localises to the secreted. It carries out the reaction a sphingomyelin + H2O = an N-acylsphing-4-enine 1-phosphate + choline + H(+). Catalyzes the hydrolysis of sphingomyelin. Sphingomyelinases D are produced by some spider in their venoms, but also by arthropods such as ticks, or pathogenic bacteria and fungi. They might play a role in pathogenicity through different mechanisms, such as membrane destabilization and host cell penetration, but also pulmonary inflammation and cutaneous lesions. This is Sphingomyelinase D from Uncinocarpus reesii (strain UAMH 1704).